Here is a 406-residue protein sequence, read N- to C-terminus: Bifunctional enzyme Fae/Hps (406 aa).

Residues 1–164 (MSDIYEIGEA…AEKDRGTHPI (164 aa)) are formaldehyde-activating enzyme. Histidine 20 acts as the Proton donor in catalysis. Positions 22, 51, 69, 71, and 86 each coordinate substrate. A 3-hexulose-6-phosphate synthase region spans residues 165–406 (MGFKAMKLWN…RLALDEDEKI (242 aa)).

In the N-terminal section; belongs to the formaldehyde-activating enzyme family. This sequence in the C-terminal section; belongs to the HPS/KGPDC family. HPS subfamily.

The enzyme catalyses 5,6,7,8-tetrahydromethanopterin + formaldehyde = 5,10-methylenetetrahydromethanopterin + H2O. It carries out the reaction D-ribulose 5-phosphate + formaldehyde = D-arabino-hex-3-ulose 6-phosphate. It functions in the pathway carbohydrate biosynthesis; D-ribose 5-phosphate biosynthesis. Catalyzes the condensation of formaldehyde with tetrahydromethanopterin (H(4)MPT) to 5,10-methylenetetrahydromethanopterin. Functionally, catalyzes the reversible formation of ribulose-5-phosphate and formaldehyde from 3-hexulose-6-phosphate. The protein is Bifunctional enzyme Fae/Hps of Methanosphaera stadtmanae (strain ATCC 43021 / DSM 3091 / JCM 11832 / MCB-3).